Reading from the N-terminus, the 269-residue chain is Indole-3-glycerol phosphate synthase (269 aa).

Belongs to the TrpC family.

It carries out the reaction 1-(2-carboxyphenylamino)-1-deoxy-D-ribulose 5-phosphate + H(+) = (1S,2R)-1-C-(indol-3-yl)glycerol 3-phosphate + CO2 + H2O. Its pathway is amino-acid biosynthesis; L-tryptophan biosynthesis; L-tryptophan from chorismate: step 4/5. The polypeptide is Indole-3-glycerol phosphate synthase (Streptomyces griseus subsp. griseus (strain JCM 4626 / CBS 651.72 / NBRC 13350 / KCC S-0626 / ISP 5235)).